Consider the following 312-residue polypeptide: DNA-directed RNA polymerase subunit alpha (312 aa).

Residues methionine 1 to threonine 229 are alpha N-terminal domain (alpha-NTD). The interval isoleucine 246–alanine 312 is alpha C-terminal domain (alpha-CTD).

This sequence belongs to the RNA polymerase alpha chain family. As to quaternary structure, in cyanobacteria the RNAP catalytic core is composed of 2 alpha, 1 beta, 1 beta', 1 gamma and 1 omega subunit. When a sigma factor is associated with the core the holoenzyme is formed, which can initiate transcription.

It catalyses the reaction RNA(n) + a ribonucleoside 5'-triphosphate = RNA(n+1) + diphosphate. DNA-dependent RNA polymerase catalyzes the transcription of DNA into RNA using the four ribonucleoside triphosphates as substrates. The sequence is that of DNA-directed RNA polymerase subunit alpha from Prochlorococcus marinus (strain SARG / CCMP1375 / SS120).